A 563-amino-acid polypeptide reads, in one-letter code: Ribulokinase (563 aa).

Belongs to the ribulokinase family.

It carries out the reaction D-ribulose + ATP = D-ribulose 5-phosphate + ADP + H(+). It catalyses the reaction L-ribulose + ATP = L-ribulose 5-phosphate + ADP + H(+). The protein operates within carbohydrate degradation; L-arabinose degradation via L-ribulose; D-xylulose 5-phosphate from L-arabinose (bacterial route): step 2/3. In Halalkalibacterium halodurans (strain ATCC BAA-125 / DSM 18197 / FERM 7344 / JCM 9153 / C-125) (Bacillus halodurans), this protein is Ribulokinase.